The chain runs to 178 residues: MNATPEKADDLIVVGKIFSVHGVRGEVKVYSFTDPIENLLDYPRWTLRHEGKVKQVELVSGRGSQKGLVVKLKGLDDRDEARLLSGHEICISRSLLPNLATDEYYWYQLVGLKVINQDEHLFGKIDHLLETGANDVLVVKPCAGSLDDRERLLPYTGQCVLAVDLEAGVMRVEWDADF.

A PRC barrel domain is found at 101–178 (TDEYYWYQLV…VMRVEWDADF (78 aa)).

It belongs to the RimM family. In terms of assembly, binds ribosomal protein uS19.

Its subcellular location is the cytoplasm. An accessory protein needed during the final step in the assembly of 30S ribosomal subunit, possibly for assembly of the head region. Essential for efficient processing of 16S rRNA. May be needed both before and after RbfA during the maturation of 16S rRNA. It has affinity for free ribosomal 30S subunits but not for 70S ribosomes. The polypeptide is Ribosome maturation factor RimM (Pseudomonas entomophila (strain L48)).